The following is a 1338-amino-acid chain: MFLMPTSSELNSGQNFLTQWMTNPSRAGVILNRGFPILEADKEKRAAVDISTSFPIKGTHFSDSFSFINEEDSLLEEQKLESNNPYKPQSDKSETHTAFPCIKKGPQVAACHSAPGHQEENKNDFIPDLASEFKEGAYKDPLFKKLEQLKEVQQKKQEQLKRQQLEQLQRLMEEQEKLLTMVSGQCTLPGLSLLPDDQSQKHRSPGNTTTGERATCCFPSYVYPDPTQEETYPSNILSHEQSNFCRTAHGDFVLTSKRASPNLFSEAQYQEAPVEKNNLKEENRNHPTGESILCWEKVTEQIQEANDKNLQKHDDSSEVANIEERPIKAAIGERKQTFEDYLEEQIQLEEQELKQKQLKEAEGPLPIKAKPKQPFLKRGEGLARFTNAKSKFQKGKESKLVTNQSTSEDQPLFKMDRQQLQRKTALKNKELCADNPILKKDSKARTKSGSVTLSQKPKMLKCSNRKSLSPSGLKIQTGKKCDGQFRDQIKFENKVTSNNKENVTECPKPCDTGCTGWNKTQGKDRLPLSTGPASRLAAKSPIRETMKESESSLDVSLQKKLETWEREKEKENLELDEFLFLEQAADEISFSSNSSFVLKILERDQQICKGHRMSSTPVKAVPQKTNPADPISHCNRSEDLDHTAREKESECEVAPKQLHSLSSADELREQPCKIRKAVQKSTSENQTEWNARDDEGVPNSDSSTDSEEQLDVTIKPSTEDRERGISSREDSPQVCDDKGPFKDTRTQEDKRRDVDLDLSDKDYSSDESIMESIKHKVSEPSRSSSLSLSKMDFDDERTWTDLEENLCNHDVVLGNESTYGTPQTCYPNNEIGILDKTIKRKIAPVKRGEDLSKSRRSRSPPTSELMMKFFPSLKPKPKSDSHLGNELKLNISQDQPPGDNARSQVLREKIIELETEIEKFKAENASLAKLRIERESALEKLRKEIADFEQQKAKELARIEEFKKEEMRKLQKERKVFEKYTTAARTFPDKKEREEIQTLKQQIADLREDLKRKETKWSSTHSRLRSQIQMLVRENTDLREEIKVMERFRLDAWKRAEAIESSLEVEKKDKLANTSVRFQNSQISSGTQVEKYKKNYLPMQGNPPRRSKSAPPRDLGNLDKGQAASPREPLEPLNFPDPEYKEEEEDQDIQGEISHPDGKVEKVYKNGCRVILFPNGTRKEVSADGKTITVTFFNGDVKQVMPDQRVIYYYAAAQTTHTTYPEGLEVLHFSSGQIEKHYPDGRKEITFPDQTVKNLFPDGQEESIFPDGTIVRVQRDGNKLIEFNNGQRELHTAQFKRREYPDGTVKTVYANGHQETKYRSGRIRVKDKEGNVLMDTEL.

The segment at 190 to 211 is disordered; it reads GLSLLPDDQSQKHRSPGNTTTG. Phosphoserine is present on residues Ser-260 and Ser-316. An alpha/beta-tubulin binding region spans residues 319-394; that stretch reads VANIEERPIK…FTNAKSKFQK (76 aa). Disordered regions lie at residues 386–414, 436–479, and 521–551; these read TNAK…PLFK, PILK…QTGK, and QGKD…ESES. Residues 400 to 409 are compositionally biased toward polar residues; that stretch reads LVTNQSTSED. A Phosphoserine modification is found at Ser-540. The segment covering 541–550 has biased composition (basic and acidic residues); it reads PIRETMKESE. Ser-589 carries the phosphoserine; by PLK2 modification. The residue at position 595 (Ser-595) is a Phosphoserine; by PLK2 and PLK4. 3 disordered regions span residues 611–789, 845–865, and 1096–1153; these read HRMS…LSLS, VKRG…TSEL, and YLPM…QGEI. Residues 635–650 are compositionally biased toward basic and acidic residues; that stretch reads NRSEDLDHTAREKESE. Over residues 679–689 the composition is skewed to polar residues; that stretch reads QKSTSENQTEW. Positions 717–764 are enriched in basic and acidic residues; that stretch reads STEDRERGISSREDSPQVCDDKGPFKDTRTQEDKRRDVDLDLSDKDYS. Residue Ser-759 is modified to Phosphoserine. Residues 895–1338 are interaction with STIL; the sequence is QPPGDNARSQ…EGNVLMDTEL (444 aa). Residues 1140–1149 show a composition bias toward acidic residues; that stretch reads YKEEEEDQDI.

This sequence belongs to the TCP10 family. In terms of assembly, forms homodimers. Associates with microtubules plus ends; binds to beta-tubulin subunits exposed on microtubule outer surface at its distal tip; also associates with microtubule lattice. Associated with the gamma-tubulin complex. Interacts with the head domain of EPB41. Interacts with LYST. Interacts with CEP152 (via C-terminus). Interacts with STIL. Forms a complex with STIL and SASS6. In terms of processing, phosphorylation at Ser-589 and Ser-595 by PLK2 is required for procentriole formation and centriole elongation. Phosphorylation by PLK2 oscillates during the cell cycle: it increases at G1/S transition and decreases during the exit from mitosis. Phosphorylation at Ser-595 is also mediated by PLK4 but is not a critical step in PLK4 function in procentriole assembly.

It localises to the cytoplasm. Its subcellular location is the cytoskeleton. It is found in the microtubule organizing center. The protein resides in the centrosome. The protein localises to the centriole. Functionally, plays an important role in cell division and centrosome function by participating in centriole duplication. Inhibits microtubule nucleation from the centrosome. Involved in the regulation of slow processive growth of centriolar microtubules. Acts as a microtubule plus-end tracking protein that stabilizes centriolar microtubules and inhibits microtubule polymerization and extension from the distal ends of centrioles. Required for centriole elongation and for STIL-mediated centriole amplification. Required for the recruitment of CEP295 to the proximal end of new-born centrioles at the centriolar microtubule wall during early S phase in a PLK4-dependent manner. May be involved in the control of centriolar-microtubule growth by acting as a regulator of tubulin release. The chain is Centrosomal P4.1-associated protein from Homo sapiens (Human).